The sequence spans 503 residues: Glucosaminyl-phosphatidylinositol-acyltransferase PIGW (503 aa).

Residues 1–21 lie on the Lumenal side of the membrane; that stretch reads MSQKQMKEAFVSNQNGTSVLE. N-linked (GlcNAc...) asparagine glycosylation occurs at Asn-15. A helical transmembrane segment spans residues 22-42; it reads ITEGLCLPALCILCRGLLIIL. Residues 43 to 56 lie on the Cytoplasmic side of the membrane; that stretch reads SQQLCSSLHNSRTR. The chain crosses the membrane as a helical span at residues 57–75; it reads FLVDFAFLIVPLVTTLTIF. Over 76–78 the chain is Lumenal; sequence SSF. A helical transmembrane segment spans residues 79–98; that stretch reads VLLEYLVAIILGAGLLYEIY. Residues 99 to 131 are Cytoplasmic-facing; it reads CRRTCYARMPFQKICEKFLKVSLESEHIPAISC. Residues 132–152 form a helical membrane-spanning segment; sequence FRVVNSAFTAVAILAVDFPLF. Topologically, residues 153–160 are lumenal; the sequence is PRRYAKTE. A helical membrane pass occupies residues 161 to 181; the sequence is LYGTGAMDYGVGGFIFGSAMV. Residues 182-201 are Cytoplasmic-facing; that stretch reads SPEVRRKYTKGSRFCYLTKS. Residues 202-222 traverse the membrane as a helical segment; the sequence is LYSLWPLVFLGVGRLVAIKSV. Over 223–236 the chain is Lumenal; sequence DYQEHLTEYGVHWN. Residues 237-257 form a helical membrane-spanning segment; that stretch reads FFFTLIAVKLITSLLLLICPL. At 258-259 the chain is on the cytoplasmic side; it reads NR. A helical transmembrane segment spans residues 260-280; the sequence is SWVVAISIAALYQLALDFTPL. At 281 to 304 the chain is on the lumenal side; that stretch reads KSLILYGTDGSGTRVGLLNANREG. The chain crosses the membrane as a helical span at residues 305–325; that stretch reads IISVLGYVAVHMAGVQTGLYV. At 326 to 337 the chain is on the cytoplasmic side; the sequence is LKKRSHIKDWIK. Residues 338–358 traverse the membrane as a helical segment; it reads VACCILLTAIGLFISLYIVQV. Residues 359–369 lie on the Lumenal side of the membrane; the sequence is NVEVASRRMAN. Residues 370 to 390 form a helical membrane-spanning segment; that stretch reads LAFCIWIVASCLILLSSLLLG. Residues 391 to 447 are Cytoplasmic-facing; it reads DIILSFAKFVIKEAAVPCSWKLIQSPTANKKHLESIVFDAKRKEPTLCLITAMNRNQ. Ser-415 is subject to Phosphoserine. The helical transmembrane segment at 448–468 threads the bilayer; that stretch reads LLFFLLSNVTTGLVNLSIDTL. Residues 469-472 lie on the Lumenal side of the membrane; that stretch reads HSST. The helical transmembrane segment at 473-493 threads the bilayer; it reads PWALCLLNLYMFTNCLIIYVL. The Cytoplasmic portion of the chain corresponds to 494 to 503; the sequence is HLQDKTIKFW.

This sequence belongs to the PIGW family.

The protein localises to the endoplasmic reticulum membrane. Its pathway is glycolipid biosynthesis; glycosylphosphatidylinositol-anchor biosynthesis. Acyltransferase that catalyzes the acyl transfer from an acyl-CoA at the 2-OH position of the inositol ring of glucosaminyl phosphatidylinositol (GlcN-PI) to generate glucosaminyl acyl phosphatidylinositol (GlcN-(acyl)PI) and participates in the fourth step of GPI-anchor biosynthesis. Required for the transport of GPI-anchored proteins to the plasma membrane. Acetylation during GPI-anchor biosynthesis is not essential for the subsequent mannosylation and is usually removed soon after the attachment of GPIs to proteins. The chain is Glucosaminyl-phosphatidylinositol-acyltransferase PIGW from Bos taurus (Bovine).